A 562-amino-acid polypeptide reads, in one-letter code: Vacuolar basic amino acid transporter 1 (562 aa).

At 1 to 30 (MQTLDETSNLLPPPEEAEAPPLEQKFHEYN) the chain is on the vacuolar side. A helical transmembrane segment spans residues 31 to 51 (LALPKFPILFSLWLGSFLSSL). The Cytoplasmic segment spans residues 52 to 100 (DSTIVANIMNRVAEEFSESSKKQWIATSFLLTNTAFQPLYGKLSDITGR). A helical transmembrane segment spans residues 101 to 121 (KSALLTAQFFFGLGCLLTCFA). The Vacuolar portion of the chain corresponds to 122 to 131 (RNVTEFSIAR). N-linked (GlcNAc...) asparagine glycosylation occurs at Asn123. Residues 132 to 152 (AICGIGAGGLNAISSIAVSDI) traverse the membrane as a helical segment. At 153 to 166 (CTARERGVYQGYAN) the chain is on the cytoplasmic side. A helical transmembrane segment spans residues 167 to 187 (IVFGFGQLLGAPLGGVFIETI). The Vacuolar segment spans residues 188-190 (GWR). The helical transmembrane segment at 191-211 (ALFGIQVPVIMLCSVLAIKNI) threads the bilayer. At 212–232 (NIKLFHVPPMKERYTLKNLSR) the chain is on the cytoplasmic side. A helical transmembrane segment spans residues 233–253 (IDIFGSLSLVATISGVLFLCS). The Vacuolar segment spans residues 254-255 (SQ). A helical membrane pass occupies residues 256–276 (LNKLYLALFTIGSFIVFILVE). At 277-292 (RYYATEKILPFELLTR) the chain is on the cytoplasmic side. Residues 293-313 (SFCLSSAVTVISSFVVFGEIF) form a helical membrane-spanning segment. Over 314-331 (RSPIYLQLLQNISVTKTG) the chain is Vacuolar. Asn324 carries N-linked (GlcNAc...) asparagine glycosylation. The helical transmembrane segment at 332–352 (LFLIFPSISVAVGSLVTGWVL) threads the bilayer. The Cytoplasmic segment spans residues 353–365 (RNTKINLAHCAYQ). A helical transmembrane segment spans residues 366–386 (IIFGGMIMQLLGLGLGYFLLS). The Vacuolar portion of the chain corresponds to 387–419 (HLNPDYTIYDMLESITFRSNSIWWKLIYVFASV). Residues 420-440 (LVSFGYACLLVATLVSIVFTV) traverse the membrane as a helical segment. At 441-448 (EKSQQGTM) the chain is on the cytoplasmic side. Residues 449-469 (TGVFYLWRSIGNVLGASLTLV) form a helical membrane-spanning segment. The Vacuolar segment spans residues 470–528 (SYENSLSSMLWNYMFKTKRDDEYHFTKKQYYSLINDSSYLRGPNFPTDIFVRILDVYKK). N-linked (GlcNAc...) asparagine glycosylation occurs at Asn504. Residues 529–549 (AFLISYIPNIALAAVGIVLSL) traverse the membrane as a helical segment. Residues 550-562 (YLVKHTYKRSSSS) are Cytoplasmic-facing.

The protein belongs to the major facilitator superfamily.

The protein localises to the vacuole membrane. Functionally, transporter required for vacuolar uptake of at least histidine and lysine. This Saccharomyces cerevisiae (strain ATCC 204508 / S288c) (Baker's yeast) protein is Vacuolar basic amino acid transporter 1 (VBA1).